A 176-amino-acid polypeptide reads, in one-letter code: Small ribosomal subunit protein uS8c (176 aa).

Belongs to the universal ribosomal protein uS8 family. As to quaternary structure, part of the 30S ribosomal subunit.

The protein resides in the plastid. The protein localises to the chloroplast. Functionally, one of the primary rRNA binding proteins, it binds directly to 16S rRNA central domain where it helps coordinate assembly of the platform of the 30S subunit. The chain is Small ribosomal subunit protein uS8c (rps8) from Stigeoclonium helveticum (Green alga).